We begin with the raw amino-acid sequence, 757 residues long: Xaa-Pro dipeptidyl-peptidase (757 aa).

Residues Ser348, Asp468, and His498 each act as charge relay system in the active site.

This sequence belongs to the peptidase S15 family. Homodimer.

The protein localises to the cytoplasm. It catalyses the reaction Hydrolyzes Xaa-Pro-|- bonds to release unblocked, N-terminal dipeptides from substrates including Ala-Pro-|-p-nitroanilide and (sequentially) Tyr-Pro-|-Phe-Pro-|-Gly-Pro-|-Ile.. Removes N-terminal dipeptides sequentially from polypeptides having unsubstituted N-termini provided that the penultimate residue is proline. The sequence is that of Xaa-Pro dipeptidyl-peptidase from Streptococcus pneumoniae (strain ATCC 700669 / Spain 23F-1).